The primary structure comprises 363 residues: Pyrimidine monooxygenase RutA (363 aa).

Residues 49–50 (IK), Asn-115, Glu-124, 140–141 (RY), and Ser-190 contribute to the FMN site.

It belongs to the NtaA/SnaA/DszA monooxygenase family. RutA subfamily.

The catalysed reaction is uracil + FMNH2 + NADH + O2 = (Z)-3-ureidoacrylate + FMN + NAD(+) + H2O + H(+). The enzyme catalyses thymine + FMNH2 + NADH + O2 = (Z)-2-methylureidoacrylate + FMN + NAD(+) + H2O + H(+). Its function is as follows. Catalyzes the pyrimidine ring opening between N-3 and C-4 by an unusual flavin hydroperoxide-catalyzed mechanism, adding oxygen atoms in the process to yield ureidoacrylate peracid, that immediately reacts with FMN forming ureidoacrylate and FMN-N(5)-oxide. The FMN-N(5)-oxide reacts spontaneously with NADH to produce FMN. Requires the flavin reductase RutF to regenerate FMN in vivo. In Rhizobium rhizogenes (strain K84 / ATCC BAA-868) (Agrobacterium radiobacter), this protein is Pyrimidine monooxygenase RutA.